The chain runs to 544 residues: L-aspartate oxidase (544 aa).

Residues 17-20, K39, 46-53, and D221 each bind FAD; these read SGGA and STFYAQGG. R288 (proton donor/acceptor) is an active-site residue. Residues E373 and 389–390 contribute to the FAD site; that span reads SL.

It belongs to the FAD-dependent oxidoreductase 2 family. NadB subfamily. FAD is required as a cofactor.

It is found in the cytoplasm. It carries out the reaction L-aspartate + O2 = iminosuccinate + H2O2. Its pathway is cofactor biosynthesis; NAD(+) biosynthesis; iminoaspartate from L-aspartate (oxidase route): step 1/1. Catalyzes the oxidation of L-aspartate to iminoaspartate, the first step in the de novo biosynthesis of NAD(+). In Acinetobacter baylyi (strain ATCC 33305 / BD413 / ADP1), this protein is L-aspartate oxidase.